Consider the following 391-residue polypeptide: Multidrug resistance protein MdtL (391 aa).

Over 1–3 (MSR) the chain is Cytoplasmic. A helical membrane pass occupies residues 4 to 24 (FLICSFALVLLYPAGIDMYLV). The Periplasmic segment spans residues 25–41 (GLPRIAADLNASEAQLH). A helical membrane pass occupies residues 42-62 (IAFSVYLAGMAAAMLFAGKVA). Residues 63-68 (DRSGRK) are Cytoplasmic-facing. The helical transmembrane segment at 69–89 (PVAIPGAALFIITSVFCSLAE) threads the bilayer. Residues 90-92 (TST) are Periplasmic-facing. Residues 93-113 (LFLAGRFLQGLGAGCCYVVAF) traverse the membrane as a helical segment. The Cytoplasmic segment spans residues 114 to 130 (AILRDTLDDRRRAKVLS). The helical transmembrane segment at 131–151 (LLNGITCIIPVLAPVLGHLIM) threads the bilayer. At 152–157 (LKFPWQ) the chain is on the periplasmic side. The chain crosses the membrane as a helical span at residues 158 to 178 (SLFWTMAIMGIAVLMLSLFIL). Residues 179–198 (KETRPAAPAASDKSRENSES) lie on the Cytoplasmic side of the membrane. A helical transmembrane segment spans residues 199 to 221 (LLNRFFLSRVVITTLSVSVILTF). Residues 222-244 (VNTSPVLLMEIMGFERGEYATIM) lie on the Periplasmic side of the membrane. Residues 245–265 (ALTAGVSMTVSFSTPFALGIF) traverse the membrane as a helical segment. Residues 266–268 (KPR) lie on the Cytoplasmic side of the membrane. The chain crosses the membrane as a helical span at residues 269 to 289 (TLMITSQVLFLAAGITLTVSP). Residues 290–292 (SHA) are Periplasmic-facing. The chain crosses the membrane as a helical span at residues 293–313 (VSLFGITLICAGFSVGFGVAM). Residues 314–330 (SQALGPFSLRAGVASST) are Cytoplasmic-facing. The helical transmembrane segment at 331–351 (LGIAQVCGSSLWIWLAAVVGI) threads the bilayer. Residues 352–355 (SAWN) are Periplasmic-facing. Residues 356–376 (MLIGILIACSIVSLLLIMFVA) form a helical membrane-spanning segment. Residues 377 to 391 (PGRPVTAHEEIHHHA) are Cytoplasmic-facing.

This sequence belongs to the major facilitator superfamily. DHA1 family. MdtL (TC 2.A.1.2.22) subfamily.

The protein resides in the cell inner membrane. Its function is as follows. Confers resistance to chloramphenicol. This Escherichia coli O157:H7 protein is Multidrug resistance protein MdtL (mdtL).